An 880-amino-acid chain; its full sequence is Probable potassium channel AKT5 (880 aa).

The Cytoplasmic segment spans residues 1 to 82 (MGIEKRKKMV…PFDPRYRAWD (82 aa)). A helical transmembrane segment spans residues 83–103 (WFLVILVLYTAWASPFEFGFL). The Extracellular portion of the chain corresponds to 104–111 (QTPRAPLS). The helical transmembrane segment at 112–132 (ILDNVVNGFFAVDIVLTFFVA) threads the bilayer. The Cytoplasmic segment spans residues 133–153 (FLDKATYLLVDDPKRIAWRYT). Residues 154–174 (STWLIFDVVSTVPYELFGSLL) traverse the membrane as a helical segment. Residues 175–182 (HNTIQGYG) lie on the Extracellular side of the membrane. The helical; Voltage-sensor transmembrane segment at 183–203 (IFSMLRLWRLHRVSKCFARLE) threads the bilayer. Topologically, residues 204-217 (KDRKYNYFWIRCTK) are cytoplasmic. A helical transmembrane segment spans residues 218 to 238 (LLLVSLFVVHCGACFCYSIAA). The Extracellular segment spans residues 239–265 (HYPDPSMTFMALAEANWKQKSLLIRYV). An intramembrane region (pore-forming) is located at residues 266–285 (TAMYWSITTFSTTGYGDIHG). The Extracellular portion of the chain corresponds to 286–291 (NNAEER). Residues 292–312 (AFILFYMIFNLGLLAYIIGNM) traverse the membrane as a helical segment. The Cytoplasmic segment spans residues 313 to 880 (TNLVVHVTSR…GDFLLLLKVS (568 aa)). Position 396–517 (396–517 (LFHGISNDLL…IMNNLLQHLK (122 aa))) interacts with a nucleoside 3',5'-cyclic phosphate. ANK repeat units lie at residues 541 to 570 (DLPL…NPNE), 574 to 603 (NGRT…DPNI), 607 to 636 (EGSV…TLSF), 637 to 667 (DTVG…DISL), and 671 to 700 (NGTT…DMDK). Residues 809–880 (VGGVYPARVT…GDFLLLLKVS (72 aa)) enclose the KHA domain.

This sequence belongs to the potassium channel family. Plant (TC 1.A.1.4) subfamily. The potassium channel is probably composed of a homo- or heterotetrameric complex of pore-forming subunits. As to expression, predominantly expressed in flowers.

It localises to the membrane. In terms of biological role, probable potassium channel. May interact with the cytoskeleton or with regulatory proteins. The protein is Probable potassium channel AKT5 (AKT5) of Arabidopsis thaliana (Mouse-ear cress).